The following is a 147-amino-acid chain: Hemoglobin subunit epsilon (147 aa).

Residues 3 to 147 form the Globin domain; it reads HFTAEEKATV…VANALAHKYH (145 aa). 2 positions are modified to phosphoserine: Ser-14 and Ser-51. Heme b is bound by residues His-64 and His-93.

Belongs to the globin family. In terms of assembly, heterotetramer of two alpha chains and two epsilon chains in early embryonic hemoglobin Gower-2; two zeta chains and two epsilon chains in early embryonic hemoglobin Gower-1. In terms of tissue distribution, red blood cells.

The epsilon chain is a beta-type chain of early mammalian embryonic hemoglobin. The polypeptide is Hemoglobin subunit epsilon (HBE1) (Bradypus tridactylus (Pale-throated three-toed sloth)).